The primary structure comprises 56 residues: Single-pass membrane and coiled-coil domain-containing protein 4 homolog (56 aa).

A disordered region spans residues 1–27 (MRQLPGKAAKETRKMKRERKQQNKEGH). Positions 9 to 31 (AKETRKMKRERKQQNKEGHNRVV) form a coiled coil. Residues 30-50 (VVTVAIPVCLAVFVMLIVYVY) form a helical membrane-spanning segment.

The protein belongs to the SMCO4 family.

It localises to the membrane. The polypeptide is Single-pass membrane and coiled-coil domain-containing protein 4 homolog (Nematostella vectensis (Starlet sea anemone)).